The chain runs to 201 residues: Small ribosomal subunit protein uS4c (201 aa).

The S4 RNA-binding domain occupies 89 to 157; that stretch reads MRLDNILFRL…VQNYIASSDP (69 aa).

This sequence belongs to the universal ribosomal protein uS4 family. As to quaternary structure, part of the 30S ribosomal subunit. Contacts protein S5. The interaction surface between S4 and S5 is involved in control of translational fidelity.

It localises to the plastid. The protein localises to the chloroplast. In terms of biological role, one of the primary rRNA binding proteins, it binds directly to 16S rRNA where it nucleates assembly of the body of the 30S subunit. With S5 and S12 plays an important role in translational accuracy. This Triticum aestivum (Wheat) protein is Small ribosomal subunit protein uS4c (rps4).